The chain runs to 1377 residues: Pleckstrin homology-like domain family B member 1 (1377 aa).

S51 is modified (phosphoserine). In terms of domain architecture, FHA spans 64-125; sequence TVIGSAARDI…LTQGCMLCLG (62 aa). Asymmetric dimethylarginine is present on R131. The segment at 150–187 is disordered; the sequence is RAPGPPYSPVPAESESLVNGNHTPQTATRGPSACASHS. The segment covering 165–178 has biased composition (polar residues); the sequence is SLVNGNHTPQTATR. Residues S192, S220, and S223 each carry the phosphoserine modification. Disordered stretches follow at residues 211 to 334 and 370 to 535; these read AAGK…LTDS and GALS…GSFS. Low complexity predominate over residues 252–273; that stretch reads SPAFSPLSSPASSGSCASHSPS. Residues 288–303 show a composition bias toward polar residues; the sequence is RSSSYHLALQPPQSRP. Residues 309–322 are compositionally biased toward basic and acidic residues; it reads ESPRLSRKGGHERP. Phosphoserine occurs at positions 324, 334, 381, 404, 430, 443, 461, 470, 489, and 501. The span at 456–473 shows a compositional bias: low complexity; it reads ELPPLSPSLSRRALSPLP. Residues 481 to 491 show a composition bias toward basic and acidic residues; the sequence is KLNREVAESPR. R512 carries the omega-N-methylarginine modification. S518 and S520 each carry phosphoserine. T522 is subject to Phosphothreonine. Phosphoserine is present on residues S533, S539, S551, S555, S563, S578, and S583. A compositionally biased stretch (low complexity) spans 653–663; that stretch reads PSRGLAGASGR. Disordered stretches follow at residues 653–707, 936–1019, and 1119–1138; these read PSRG…APST, TGPA…GSLP, and SMET…DNMS. The segment covering 677 to 691 has biased composition (basic and acidic residues); sequence ESMERSDEENLKEEC. S678 is modified (phosphoserine). The stretch at 683–809 forms a coiled coil; that stretch reads DEENLKEECS…TETKLFEDLE (127 aa). S971 and S1017 each carry phosphoserine. A compositionally biased stretch (low complexity) spans 971-992; that stretch reads SPLPRTRSGPLPSSSGSSSSSS. Positions 1009–1018 are enriched in polar residues; the sequence is LLTQNGTGSL. The stretch at 1144-1208 forms a coiled coil; sequence DMGKIEEMEK…ARRQQLVEKE (65 aa). The PH domain occupies 1256–1370; that stretch reads SKVCRGYLVK…WMDVIVTGAE (115 aa).

The chain is Pleckstrin homology-like domain family B member 1 (PHLDB1) from Homo sapiens (Human).